A 320-amino-acid chain; its full sequence is Beta-ketoacyl-[acyl-carrier-protein] synthase III (320 aa).

Active-site residues include Cys113 and His247. Residues 248-252 form an ACP-binding region; sequence QANRR. Residue Asn277 is part of the active site.

The protein belongs to the thiolase-like superfamily. FabH family. As to quaternary structure, homodimer.

It is found in the cytoplasm. The enzyme catalyses malonyl-[ACP] + acetyl-CoA + H(+) = 3-oxobutanoyl-[ACP] + CO2 + CoA. It participates in lipid metabolism; fatty acid biosynthesis. Its function is as follows. Catalyzes the condensation reaction of fatty acid synthesis by the addition to an acyl acceptor of two carbons from malonyl-ACP. Catalyzes the first condensation reaction which initiates fatty acid synthesis and may therefore play a role in governing the total rate of fatty acid production. Possesses both acetoacetyl-ACP synthase and acetyl transacylase activities. Its substrate specificity determines the biosynthesis of branched-chain and/or straight-chain of fatty acids. The polypeptide is Beta-ketoacyl-[acyl-carrier-protein] synthase III (Acidiphilium cryptum (strain JF-5)).